We begin with the raw amino-acid sequence, 311 residues long: Urease accessory protein UreD (311 aa).

Belongs to the UreD family. UreD, UreF and UreG form a complex that acts as a GTP-hydrolysis-dependent molecular chaperone, activating the urease apoprotein by helping to assemble the nickel containing metallocenter of UreC. The UreE protein probably delivers the nickel.

It is found in the cytoplasm. Functionally, required for maturation of urease via the functional incorporation of the urease nickel metallocenter. The chain is Urease accessory protein UreD from Parasynechococcus marenigrum (strain WH8102).